An 87-amino-acid chain; its full sequence is Small ribosomal subunit protein bS16 (87 aa).

Belongs to the bacterial ribosomal protein bS16 family.

This is Small ribosomal subunit protein bS16 from Onion yellows phytoplasma (strain OY-M).